Reading from the N-terminus, the 453-residue chain is UDP-N-acetylmuramoylalanine--D-glutamate ligase (453 aa).

117 to 123 (GSNGKST) serves as a coordination point for ATP.

This sequence belongs to the MurCDEF family.

The protein localises to the cytoplasm. The enzyme catalyses UDP-N-acetyl-alpha-D-muramoyl-L-alanine + D-glutamate + ATP = UDP-N-acetyl-alpha-D-muramoyl-L-alanyl-D-glutamate + ADP + phosphate + H(+). Its pathway is cell wall biogenesis; peptidoglycan biosynthesis. Cell wall formation. Catalyzes the addition of glutamate to the nucleotide precursor UDP-N-acetylmuramoyl-L-alanine (UMA). The polypeptide is UDP-N-acetylmuramoylalanine--D-glutamate ligase (Chromobacterium violaceum (strain ATCC 12472 / DSM 30191 / JCM 1249 / CCUG 213 / NBRC 12614 / NCIMB 9131 / NCTC 9757 / MK)).